Consider the following 334-residue polypeptide: Thioredoxin reductase (334 aa).

FAD-binding positions include 11–14, 40–41, Gln45, Asn54, Cys148, Asp294, and 301–303; these read SGAG, TA, and RQA. A disulfide bond links Cys145 and Cys148.

This sequence belongs to the class-II pyridine nucleotide-disulfide oxidoreductase family. As to quaternary structure, homodimer. FAD serves as cofactor.

It carries out the reaction [thioredoxin]-dithiol + NADP(+) = [thioredoxin]-disulfide + NADPH + H(+). Component of the thioredoxin-thioredoxin reductase system which may be involved in biosynthesis of penicillins and cephalosporins and may be important in determining the thiol-disulfide redox balance. This Penicillium chrysogenum (Penicillium notatum) protein is Thioredoxin reductase (TRR1).